The sequence spans 269 residues: 2-dehydro-3-deoxyphosphooctonate aldolase (269 aa).

This sequence belongs to the KdsA family.

The protein resides in the cytoplasm. It catalyses the reaction D-arabinose 5-phosphate + phosphoenolpyruvate + H2O = 3-deoxy-alpha-D-manno-2-octulosonate-8-phosphate + phosphate. It functions in the pathway carbohydrate biosynthesis; 3-deoxy-D-manno-octulosonate biosynthesis; 3-deoxy-D-manno-octulosonate from D-ribulose 5-phosphate: step 2/3. Its pathway is bacterial outer membrane biogenesis; lipopolysaccharide biosynthesis. This chain is 2-dehydro-3-deoxyphosphooctonate aldolase, found in Chlamydia felis (strain Fe/C-56) (Chlamydophila felis).